Here is a 261-residue protein sequence, read N- to C-terminus: Cytochrome c oxidase subunit 3 (261 aa).

The Mitochondrial matrix portion of the chain corresponds to 1-15 (MTHQTHAYHTVNPSP). The chain crosses the membrane as a helical span at residues 16–34 (WPLTGALSALLMTSGLIMW). Residues 35–40 (FHFNSP) are Mitochondrial intermembrane-facing. A helical membrane pass occupies residues 41-66 (LLLVLGLTTNFLTMYQWWRDIIREST). Topologically, residues 67 to 72 (FQGHHT) are mitochondrial matrix. A helical transmembrane segment spans residues 73–105 (TIVQKGLRYGMILFIVSEVFFFAGFFWAFYHSS). Residues 106–128 (LAPTPELGGCWPPTGINPLNPLE) are Mitochondrial intermembrane-facing. A helical transmembrane segment spans residues 129 to 152 (VPLLNTSVLLASGVSITWAHHSLM). Topologically, residues 153–155 (EGH) are mitochondrial matrix. A helical transmembrane segment spans residues 156–183 (RKHMLQALFITIALGVYFTLLQASEYYE). Topologically, residues 184 to 190 (APFTISD) are mitochondrial intermembrane. A helical transmembrane segment spans residues 191–223 (GIYGSTFFVATGFHGLHVIIGSSFLIVCFMRQL). Residues 224 to 232 (KFHFTSSHH) lie on the Mitochondrial matrix side of the membrane. The helical transmembrane segment at 233–256 (FGFEAAAWYWHFVDVVWLFLYVSI) threads the bilayer. The Mitochondrial intermembrane portion of the chain corresponds to 257-261 (YWWGS).

This sequence belongs to the cytochrome c oxidase subunit 3 family. As to quaternary structure, component of the cytochrome c oxidase (complex IV, CIV), a multisubunit enzyme composed of 14 subunits. The complex is composed of a catalytic core of 3 subunits MT-CO1, MT-CO2 and MT-CO3, encoded in the mitochondrial DNA, and 11 supernumerary subunits COX4I, COX5A, COX5B, COX6A, COX6B, COX6C, COX7A, COX7B, COX7C, COX8 and NDUFA4, which are encoded in the nuclear genome. The complex exists as a monomer or a dimer and forms supercomplexes (SCs) in the inner mitochondrial membrane with NADH-ubiquinone oxidoreductase (complex I, CI) and ubiquinol-cytochrome c oxidoreductase (cytochrome b-c1 complex, complex III, CIII), resulting in different assemblies (supercomplex SCI(1)III(2)IV(1) and megacomplex MCI(2)III(2)IV(2)).

It localises to the mitochondrion inner membrane. It catalyses the reaction 4 Fe(II)-[cytochrome c] + O2 + 8 H(+)(in) = 4 Fe(III)-[cytochrome c] + 2 H2O + 4 H(+)(out). Component of the cytochrome c oxidase, the last enzyme in the mitochondrial electron transport chain which drives oxidative phosphorylation. The respiratory chain contains 3 multisubunit complexes succinate dehydrogenase (complex II, CII), ubiquinol-cytochrome c oxidoreductase (cytochrome b-c1 complex, complex III, CIII) and cytochrome c oxidase (complex IV, CIV), that cooperate to transfer electrons derived from NADH and succinate to molecular oxygen, creating an electrochemical gradient over the inner membrane that drives transmembrane transport and the ATP synthase. Cytochrome c oxidase is the component of the respiratory chain that catalyzes the reduction of oxygen to water. Electrons originating from reduced cytochrome c in the intermembrane space (IMS) are transferred via the dinuclear copper A center (CU(A)) of subunit 2 and heme A of subunit 1 to the active site in subunit 1, a binuclear center (BNC) formed by heme A3 and copper B (CU(B)). The BNC reduces molecular oxygen to 2 water molecules using 4 electrons from cytochrome c in the IMS and 4 protons from the mitochondrial matrix. The protein is Cytochrome c oxidase subunit 3 (MT-CO3) of Dasypus novemcinctus (Nine-banded armadillo).